Here is a 255-residue protein sequence, read N- to C-terminus: NAD kinase (255 aa).

The Proton acceptor role is filled by D44. Residues 44-45, H49, 114-115, D144, A152, 155-160, and Q216 each bind NAD(+); these read DG, NE, and SAYNLS.

This sequence belongs to the NAD kinase family. Requires a divalent metal cation as cofactor.

It localises to the cytoplasm. The enzyme catalyses NAD(+) + ATP = ADP + NADP(+) + H(+). Its function is as follows. Involved in the regulation of the intracellular balance of NAD and NADP, and is a key enzyme in the biosynthesis of NADP. Catalyzes specifically the phosphorylation on 2'-hydroxyl of the adenosine moiety of NAD to yield NADP. The sequence is that of NAD kinase from Rickettsia rickettsii (strain Iowa).